A 394-amino-acid chain; its full sequence is MSKEKFERTKPHVNVGTIGHVDHGKTTLTAAITTVLAKTYGGSARAFDQIDNAPEEKARGITINTSHVEYDTPARHYAHVDCPGHADYVKNMITGAAQMDGAILVVAATDGPMPQTREHILLGRQVGVPYIIVFLNKCDMVDDEELLELVEMEVRELLSQYDFPGDDTPVIRGSALKALEGDAEWEAKIIELAEALDSYIPQPERAIDRPFLLPIEDVFSISGRGTVVTGRVERGIVKVGEEVEIVGIIDTIKTTCTGVEMFRKLLDEGRAGENVGVLLRGTKRDDVQRGQVLAKPGSIKPHTKFESEVYILSKDEGGRHTPFFKGYRPQFYFRTTDVTGTIELPEGVEMVMPGDNVNMVVNLIAPIAMDDGLRFAIREGGRTVGAGVVAKVIE.

The tr-type G domain occupies 10-204 (KPHVNVGTIG…ALDSYIPQPE (195 aa)). The tract at residues 19 to 26 (GHVDHGKT) is G1. GTP is bound at residue 19–26 (GHVDHGKT). T26 provides a ligand contact to Mg(2+). Positions 60–64 (GITIN) are G2. The tract at residues 81–84 (DCPG) is G3. GTP-binding positions include 81–85 (DCPGH) and 136–139 (NKCD). The G4 stretch occupies residues 136–139 (NKCD). The interval 174-176 (SAL) is G5.

Belongs to the TRAFAC class translation factor GTPase superfamily. Classic translation factor GTPase family. EF-Tu/EF-1A subfamily. In terms of assembly, monomer.

It is found in the cytoplasm. The enzyme catalyses GTP + H2O = GDP + phosphate + H(+). Functionally, GTP hydrolase that promotes the GTP-dependent binding of aminoacyl-tRNA to the A-site of ribosomes during protein biosynthesis. The chain is Elongation factor Tu 2 from Yersinia pestis bv. Antiqua (strain Antiqua).